Consider the following 196-residue polypeptide: Beta-crystallin A4 (196 aa).

Thr-2 carries the post-translational modification N-acetylthreonine. The interval 2-11 (TLQCTKSAGP) is N-terminal arm. 2 Beta/gamma crystallin 'Greek key' domains span residues 12–51 (WKMV…KVLS) and 52–98 (GAWV…RPAA). Positions 99-104 (CANHRD) are connecting peptide. 2 consecutive Beta/gamma crystallin 'Greek key' domains span residues 105–146 (SRLT…HVHS) and 147–195 (GAWV…RRIQ).

Belongs to the beta/gamma-crystallin family. In terms of assembly, homo/heterodimer, or complexes of higher-order. The structure of beta-crystallin oligomers seems to be stabilized through interactions between the N-terminal arms.

Its function is as follows. Crystallins are the dominant structural components of the vertebrate eye lens. The polypeptide is Beta-crystallin A4 (CRYBA4) (Homo sapiens (Human)).